The chain runs to 431 residues: Enolase (431 aa).

Gln167 provides a ligand contact to (2R)-2-phosphoglycerate. Glu209 acts as the Proton donor in catalysis. Positions 246, 290, and 317 each coordinate Mg(2+). (2R)-2-phosphoglycerate contacts are provided by Lys342, Arg371, Ser372, and Lys393. Lys342 (proton acceptor) is an active-site residue.

The protein belongs to the enolase family. In terms of assembly, component of the RNA degradosome, a multiprotein complex involved in RNA processing and mRNA degradation. Requires Mg(2+) as cofactor.

The protein localises to the cytoplasm. Its subcellular location is the secreted. The protein resides in the cell surface. It catalyses the reaction (2R)-2-phosphoglycerate = phosphoenolpyruvate + H2O. Its pathway is carbohydrate degradation; glycolysis; pyruvate from D-glyceraldehyde 3-phosphate: step 4/5. Its function is as follows. Catalyzes the reversible conversion of 2-phosphoglycerate (2-PG) into phosphoenolpyruvate (PEP). It is essential for the degradation of carbohydrates via glycolysis. This Yersinia pseudotuberculosis serotype O:1b (strain IP 31758) protein is Enolase.